The sequence spans 677 residues: Bargin (677 aa).

Composition is skewed to low complexity over residues 1–13 (MDRGLPGPATPAV) and 29–39 (APHAAAGPDGQ). Disordered stretches follow at residues 1–39 (MDRGLPGPATPAVTPQPPARPQDDEEAAAPHAAAGPDGQ) and 168–190 (SQATKNSGSSQGLGGSPGSHSHT). Residues 25-270 (EEAAAPHAAA…RENHGQADHS (246 aa)) form the BAR domain. Residues Ser-183, Ser-270, and Ser-272 each carry the phosphoserine modification. The region spanning 284–477 (VSLATHLQEL…ALIQSADTLF (194 aa)) is the Rho-GAP domain. The interval 504–577 (SEELPSTAVP…DMARRSTGSL (74 aa)) is disordered. Positions 516-530 (ATTPAPAPAPAPAPA) are enriched in pro residues. Phosphoserine occurs at positions 552 and 558. The tract at residues 574-677 (TGSLAAAVET…IADLTEGLED (104 aa)) is mediates non-covalent binding of poly-ubiquitin chains.

Expressed in brain (at protein level).

It is found in the cell membrane. The protein localises to the cytoplasm. It localises to the cytosol. Its function is as follows. GTPase activating protein (GAP) which specifically converts GTP-bound RAC1 and CDC42 in their inactive GDP-bound form. The GAP activity is enhanced by the non-covalent binding of K-29 and K-48 polyubiquitin chains. The protein is Bargin of Homo sapiens (Human).